Here is a 402-residue protein sequence, read N- to C-terminus: Subtilisin-like protease 9 (402 aa).

An N-terminal signal peptide occupies residues 1 to 20 (MGFFRQLFSLSLCALSLAIP). A propeptide spanning residues 21 to 120 (SKLIGLENTQ…VEVDRVVKLD (100 aa)) is cleaved from the precursor. The 84-residue stretch at 36 to 119 (SYIVVMKSTI…YVEVDRVVKL (84 aa)) folds into the Inhibitor I9 domain. Residues 130-402 (SWGLGRISHK…RKLLYNGSGA (273 aa)) enclose the Peptidase S8 domain. Active-site charge relay system residues include D162 and H193. An N-linked (GlcNAc...) asparagine glycan is attached at N254. The active-site Charge relay system is the S348. Residues N390 and N398 are each glycosylated (N-linked (GlcNAc...) asparagine).

This sequence belongs to the peptidase S8 family.

The protein localises to the secreted. Secreted subtilisin-like serine protease with keratinolytic activity that contributes to pathogenicity. In Arthroderma benhamiae (strain ATCC MYA-4681 / CBS 112371) (Trichophyton mentagrophytes), this protein is Subtilisin-like protease 9 (SUB9).